Consider the following 455-residue polypeptide: Phosphoglucosamine mutase (455 aa).

The active-site Phosphoserine intermediate is the Ser-104. Mg(2+) is bound by residues Ser-104, Asp-253, Asp-255, and Asp-257. Residue Ser-104 is modified to Phosphoserine.

Belongs to the phosphohexose mutase family. Requires Mg(2+) as cofactor. Post-translationally, activated by phosphorylation.

The catalysed reaction is alpha-D-glucosamine 1-phosphate = D-glucosamine 6-phosphate. Its function is as follows. Catalyzes the conversion of glucosamine-6-phosphate to glucosamine-1-phosphate. In Psychrobacter cryohalolentis (strain ATCC BAA-1226 / DSM 17306 / VKM B-2378 / K5), this protein is Phosphoglucosamine mutase.